We begin with the raw amino-acid sequence, 67 residues long: UPF0434 protein Bphy_0537 (67 aa).

This sequence belongs to the UPF0434 family.

In Paraburkholderia phymatum (strain DSM 17167 / CIP 108236 / LMG 21445 / STM815) (Burkholderia phymatum), this protein is UPF0434 protein Bphy_0537.